The following is an 808-amino-acid chain: PH domain-containing protein DDB_G0275795 (808 aa).

Positions 57–121 form a coiled coil; that stretch reads ENLEILKEIK…RNRQASQQEL (65 aa). The span at 108 to 120 shows a compositional bias: polar residues; that stretch reads ESTTRNRQASQQE. Disordered regions lie at residues 108 to 127, 228 to 325, 339 to 375, 405 to 475, 523 to 542, and 645 to 675; these read ESTT…PPIL, GANA…QDEE, EKLK…QLQS, QQQQ…NGSN, DQTK…ELKK, and KGGG…SNTD. In terms of domain architecture, PH spans 124-216; sequence PPILSGYLKK…WTEGLKEFKK (93 aa). The segment covering 228–248 has biased composition (low complexity); sequence GANANGNGNSSPNMSSSGSYS. Polar residues predominate over residues 255-274; sequence ESSQQPLNSSTGAINTTPQR. Residues 293–321 are compositionally biased toward low complexity; that stretch reads SHSSSSTAPDSPTLSSSYVPPPSSSNLNP. Residues 322-412 adopt a coiled-coil conformation; sequence QDEELKRREN…QQQQQQQQQQ (91 aa). Residues 339–353 are compositionally biased toward basic and acidic residues; it reads EKLKQQDDQQQDDKQ. Low complexity-rich tracts occupy residues 354 to 375 and 405 to 414; these read QQQQ…QLQS and QQQQQQQQPP. Polar residues predominate over residues 417 to 428; it reads SPQNSRHGSTNY. Residues 429–449 show a composition bias toward low complexity; the sequence is SQLQQQQQQPQQQPQQQSSPQ. A compositionally biased stretch (polar residues) spans 450 to 475; that stretch reads VIISNNNSPRFESQQQQNNFHNNGSN. The stretch at 487–645 forms a coiled coil; it reads DELNKKFLKE…DKYINELLEK (159 aa). Basic and acidic residues predominate over residues 525–542; that stretch reads TKTDAEEKQNKSSNELKK. A compositionally biased stretch (low complexity) spans 654–673; sequence NSNNNNNSNNNNNNSNNNSN. Positions 678 to 734 form a coiled coil; sequence KESMVAHQTQNAFLLQEIQRLETQSQFKLDIKIQQIEELENQLEQQLYQFHRFREAI.

The polypeptide is PH domain-containing protein DDB_G0275795 (Dictyostelium discoideum (Social amoeba)).